The sequence spans 133 residues: Small ribosomal subunit protein bS6 (133 aa).

The segment at 93 to 133 is disordered; the sequence is KTAVTEPSPMMKEEPRRERRDDSAPRQERAEKKTETTEDNA. A compositionally biased stretch (basic and acidic residues) spans 103 to 133; that stretch reads MKEEPRRERRDDSAPRQERAEKKTETTEDNA.

It belongs to the bacterial ribosomal protein bS6 family.

In terms of biological role, binds together with bS18 to 16S ribosomal RNA. The chain is Small ribosomal subunit protein bS6 from Alteromonas mediterranea (strain DSM 17117 / CIP 110805 / LMG 28347 / Deep ecotype).